We begin with the raw amino-acid sequence, 499 residues long: Apolipoprotein N-acyltransferase (499 aa).

6 helical membrane passes run 18 to 38 (FSPY…LIIT), 50 to 70 (LGFL…YISI), 82 to 102 (IIII…FVIL), 105 to 125 (FFFP…AWMI), 156 to 176 (PIIG…MCVL), and 182 to 202 (SYYP…LNFF). A CN hydrolase domain is found at 217 to 461 (IQGNISQHTY…NDFLLEEVFS (245 aa)). Glu-257 acts as the Proton acceptor in catalysis. The active site involves Lys-320. Cys-372 serves as the catalytic Nucleophile. The helical transmembrane segment at 476–496 (LLFFSIICFIISFFIKIKLIF) threads the bilayer.

Belongs to the CN hydrolase family. Apolipoprotein N-acyltransferase subfamily.

Its subcellular location is the cell membrane. The enzyme catalyses N-terminal S-1,2-diacyl-sn-glyceryl-L-cysteinyl-[lipoprotein] + a glycerophospholipid = N-acyl-S-1,2-diacyl-sn-glyceryl-L-cysteinyl-[lipoprotein] + a 2-acyl-sn-glycero-3-phospholipid + H(+). Its pathway is protein modification; lipoprotein biosynthesis (N-acyl transfer). In terms of biological role, catalyzes the phospholipid dependent N-acylation of the N-terminal cysteine of apolipoprotein, the last step in lipoprotein maturation. In Wigglesworthia glossinidia brevipalpis, this protein is Apolipoprotein N-acyltransferase.